A 126-amino-acid chain; its full sequence is Holo-[acyl-carrier-protein] synthase (126 aa).

Positions 9 and 58 each coordinate Mg(2+).

It belongs to the P-Pant transferase superfamily. AcpS family. Mg(2+) is required as a cofactor.

The protein localises to the cytoplasm. It catalyses the reaction apo-[ACP] + CoA = holo-[ACP] + adenosine 3',5'-bisphosphate + H(+). In terms of biological role, transfers the 4'-phosphopantetheine moiety from coenzyme A to a Ser of acyl-carrier-protein. The sequence is that of Holo-[acyl-carrier-protein] synthase from Salmonella agona (strain SL483).